The primary structure comprises 466 residues: Light-independent protochlorophyllide reductase subunit N (466 aa).

3 residues coordinate [4Fe-4S] cluster: Cys-23, Cys-48, and Cys-108.

This sequence belongs to the BchN/ChlN family. Protochlorophyllide reductase is composed of three subunits; ChlL, ChlN and ChlB. Forms a heterotetramer of two ChlB and two ChlN subunits. [4Fe-4S] cluster is required as a cofactor.

The enzyme catalyses chlorophyllide a + oxidized 2[4Fe-4S]-[ferredoxin] + 2 ADP + 2 phosphate = protochlorophyllide a + reduced 2[4Fe-4S]-[ferredoxin] + 2 ATP + 2 H2O. The protein operates within porphyrin-containing compound metabolism; chlorophyll biosynthesis (light-independent). Its function is as follows. Component of the dark-operative protochlorophyllide reductase (DPOR) that uses Mg-ATP and reduced ferredoxin to reduce ring D of protochlorophyllide (Pchlide) to form chlorophyllide a (Chlide). This reaction is light-independent. The NB-protein (ChlN-ChlB) is the catalytic component of the complex. The chain is Light-independent protochlorophyllide reductase subunit N from Synechococcus elongatus (strain ATCC 33912 / PCC 7942 / FACHB-805) (Anacystis nidulans R2).